The following is a 516-amino-acid chain: Bifunctional purine biosynthesis protein PurH (516 aa).

In terms of domain architecture, MGS-like spans 1–146; that stretch reads MAPFALLSVS…KNHADVAVLT (146 aa).

Belongs to the PurH family.

It catalyses the reaction (6R)-10-formyltetrahydrofolate + 5-amino-1-(5-phospho-beta-D-ribosyl)imidazole-4-carboxamide = 5-formamido-1-(5-phospho-D-ribosyl)imidazole-4-carboxamide + (6S)-5,6,7,8-tetrahydrofolate. It carries out the reaction IMP + H2O = 5-formamido-1-(5-phospho-D-ribosyl)imidazole-4-carboxamide. It participates in purine metabolism; IMP biosynthesis via de novo pathway; 5-formamido-1-(5-phospho-D-ribosyl)imidazole-4-carboxamide from 5-amino-1-(5-phospho-D-ribosyl)imidazole-4-carboxamide (10-formyl THF route): step 1/1. It functions in the pathway purine metabolism; IMP biosynthesis via de novo pathway; IMP from 5-formamido-1-(5-phospho-D-ribosyl)imidazole-4-carboxamide: step 1/1. This Parasynechococcus marenigrum (strain WH8102) protein is Bifunctional purine biosynthesis protein PurH.